We begin with the raw amino-acid sequence, 444 residues long: Glutamate dehydrogenase (444 aa).

Lys-124 is a catalytic residue.

It belongs to the Glu/Leu/Phe/Val dehydrogenases family. In terms of assembly, homohexamer.

It catalyses the reaction L-glutamate + NAD(+) + H2O = 2-oxoglutarate + NH4(+) + NADH + H(+). It carries out the reaction L-glutamate + NADP(+) + H2O = 2-oxoglutarate + NH4(+) + NADPH + H(+). The sequence is that of Glutamate dehydrogenase (gdhA) from Bacteroides thetaiotaomicron (strain ATCC 29148 / DSM 2079 / JCM 5827 / CCUG 10774 / NCTC 10582 / VPI-5482 / E50).